A 179-amino-acid chain; its full sequence is MIAQKSVRDYIRTIPDFPHDGILFRDVTTLFQDPRGFRLAVDQLLSPFVGETIDAVAGLEARGFILGGAVAHQLSKGFVSVRKKGKLPAATIEQAYKLEYGEAVVEIHDDAVQPGDKVLIVDDLLATGGTAEAGIKLIERLGAEVIGCAFVIDLPDLGGRAKVEAMGVPVHAICAYDGL.

Belongs to the purine/pyrimidine phosphoribosyltransferase family. In terms of assembly, homodimer.

Its subcellular location is the cytoplasm. The enzyme catalyses AMP + diphosphate = 5-phospho-alpha-D-ribose 1-diphosphate + adenine. It participates in purine metabolism; AMP biosynthesis via salvage pathway; AMP from adenine: step 1/1. Catalyzes a salvage reaction resulting in the formation of AMP, that is energically less costly than de novo synthesis. This Jannaschia sp. (strain CCS1) protein is Adenine phosphoribosyltransferase.